The sequence spans 256 residues: Protein CUSTOS (256 aa).

Over residues Met1–Ser19 the composition is skewed to low complexity. 3 disordered regions span residues Met1 to Phe83, Phe127 to Arg163, and Ile227 to Asn256. Position 62 is a phosphoserine (Ser62). Residues Arg63 to Phe83 show a composition bias toward basic and acidic residues. Residue Thr80 is modified to Phosphothreonine. Ser139 is subject to Phosphoserine. The short motif at Gln228 to Ala235 is the Nucleolar localization signal (NLS) element. Positions Gln228–Lys237 are enriched in basic residues. Residues Pro246–Asn256 are compositionally biased toward low complexity.

It belongs to the CUSTOS family.

The protein resides in the nucleus envelope. Its function is as follows. Plays a role in the regulation of Wnt signaling pathway during early development. The chain is Protein CUSTOS from Mus musculus (Mouse).